Here is a 137-residue protein sequence, read N- to C-terminus: MMQPKKTKFRKAHKGRIHGVASSGATLSFGQFGLKAMAPERITARQIEAARRALTRHMKRAGRVWIRIFPDVPVSKKPAEVRMGSGKGSPELWVARVKPGRVIFEIDGVNLQIAREALTLAAAKLPIKTRFVARIAE.

The protein belongs to the universal ribosomal protein uL16 family. Part of the 50S ribosomal subunit.

In terms of biological role, binds 23S rRNA and is also seen to make contacts with the A and possibly P site tRNAs. The sequence is that of Large ribosomal subunit protein uL16 from Rhodopseudomonas palustris (strain BisA53).